Here is a 38-residue protein sequence, read N- to C-terminus: Cytochrome b6-f complex subunit 5 (38 aa).

The helical transmembrane segment at 5–25 (LLSGIVLGSIPITLAGSFVTA) threads the bilayer.

The protein belongs to the PetG family. As to quaternary structure, the 4 large subunits of the cytochrome b6-f complex are cytochrome b6, subunit IV (17 kDa polypeptide, PetD), cytochrome f and the Rieske protein, while the 4 small subunits are PetG, PetL, PetM and PetN. The complex functions as a dimer.

It localises to the plastid. The protein resides in the chloroplast thylakoid membrane. Functionally, component of the cytochrome b6-f complex, which mediates electron transfer between photosystem II (PSII) and photosystem I (PSI), cyclic electron flow around PSI, and state transitions. PetG is required for either the stability or assembly of the cytochrome b6-f complex. In Huperzia lucidula (Shining clubmoss), this protein is Cytochrome b6-f complex subunit 5.